Reading from the N-terminus, the 404-residue chain is Argininosuccinate synthase (404 aa).

ATP contacts are provided by residues 10-18 (AYSGGLDTS) and alanine 37. L-citrulline-binding residues include tyrosine 90 and serine 95. Position 120 (glycine 120) interacts with ATP. Threonine 122, asparagine 126, and aspartate 127 together coordinate L-aspartate. Asparagine 126 provides a ligand contact to L-citrulline. L-citrulline-binding residues include arginine 130, serine 180, serine 189, glutamate 265, and tyrosine 277.

It belongs to the argininosuccinate synthase family. Type 1 subfamily. In terms of assembly, homotetramer.

It is found in the cytoplasm. It carries out the reaction L-citrulline + L-aspartate + ATP = 2-(N(omega)-L-arginino)succinate + AMP + diphosphate + H(+). The protein operates within amino-acid biosynthesis; L-arginine biosynthesis; L-arginine from L-ornithine and carbamoyl phosphate: step 2/3. The sequence is that of Argininosuccinate synthase from Helicobacter hepaticus (strain ATCC 51449 / 3B1).